The following is a 74-amino-acid chain: UPF0270 protein NT01EI_3666 (74 aa).

The protein belongs to the UPF0270 family.

This chain is UPF0270 protein NT01EI_3666, found in Edwardsiella ictaluri (strain 93-146).